The primary structure comprises 248 residues: Triosephosphate isomerase (248 aa).

Position 9–11 (9–11 (NWK)) interacts with substrate. His92 acts as the Electrophile in catalysis. The active-site Proton acceptor is Glu164. Residues Gly170, Ser209, and 230–231 (GG) contribute to the substrate site.

The protein belongs to the triosephosphate isomerase family. As to quaternary structure, homodimer.

It is found in the cytoplasm. It catalyses the reaction D-glyceraldehyde 3-phosphate = dihydroxyacetone phosphate. It participates in carbohydrate biosynthesis; gluconeogenesis. The protein operates within carbohydrate degradation; glycolysis; D-glyceraldehyde 3-phosphate from glycerone phosphate: step 1/1. Its function is as follows. Involved in the gluconeogenesis. Catalyzes stereospecifically the conversion of dihydroxyacetone phosphate (DHAP) to D-glyceraldehyde-3-phosphate (G3P). This chain is Triosephosphate isomerase, found in Thiobacillus denitrificans (strain ATCC 25259 / T1).